We begin with the raw amino-acid sequence, 287 residues long: Cyclopropane mycolic acid synthase 1 (287 aa).

S-adenosyl-L-methionine-binding positions include 33 to 34, 68 to 76, 94 to 99, and 123 to 124; these read YS, LLDVGCGWG, TLSKNQ, and WE. Cysteine 269 is an active-site residue.

This sequence belongs to the CFA/CMAS family. Homodimer.

It is found in the cytoplasm. It catalyses the reaction a 1-acyl-2-(9Z)-enoyl-sn-glycero-3-phospholipid + S-adenosyl-L-methionine = a 1-acyl-2-(9-cyclopronane)-acyl-sn-glycero-3-phospholipid + S-adenosyl-L-homocysteine + H(+). It functions in the pathway lipid metabolism; mycolic acid biosynthesis. Functionally, catalyzes the conversion of a double bond to a cyclopropane ring at the distal position of an alpha mycolic acid via the transfer of a methylene group from S-adenosyl-L-methionine. Cyclopropanated mycolic acids are key factors participating in cell envelope permeability, host immunomodulation and persistence. This Mycobacterium tuberculosis (strain ATCC 25177 / H37Ra) protein is Cyclopropane mycolic acid synthase 1 (cmaA1).